A 208-amino-acid chain; its full sequence is Peroxiredoxin (208 aa).

The 155-residue stretch at 2 to 156 (PLLGDDFPQL…IVRAVKALQT (155 aa)) folds into the Thioredoxin domain. Cysteine 44 functions as the Cysteine sulfenic acid (-SOH) intermediate in the catalytic mechanism. Arginine 119 is a substrate binding site.

It belongs to the peroxiredoxin family. Prx6 subfamily. As to quaternary structure, homodecamer. Pentamer of dimers that assemble into a ring structure.

The protein localises to the cytoplasm. It carries out the reaction a hydroperoxide + [thioredoxin]-dithiol = an alcohol + [thioredoxin]-disulfide + H2O. In terms of biological role, thiol-specific peroxidase that catalyzes the reduction of hydrogen peroxide and organic hydroperoxides to water and alcohols, respectively. Plays a role in cell protection against oxidative stress by detoxifying peroxides. In Treponema denticola (strain ATCC 35405 / DSM 14222 / CIP 103919 / JCM 8153 / KCTC 15104), this protein is Peroxiredoxin.